The following is a 201-amino-acid chain: Dephospho-CoA kinase (201 aa).

The DPCK domain maps to 3-201 (WIGLTGGIAC…KWLEELKNQN (199 aa)). An ATP-binding site is contributed by 11 to 16 (ACGKST).

This sequence belongs to the CoaE family.

The protein localises to the cytoplasm. It carries out the reaction 3'-dephospho-CoA + ATP = ADP + CoA + H(+). It functions in the pathway cofactor biosynthesis; coenzyme A biosynthesis; CoA from (R)-pantothenate: step 5/5. Its function is as follows. Catalyzes the phosphorylation of the 3'-hydroxyl group of dephosphocoenzyme A to form coenzyme A. In Bdellovibrio bacteriovorus (strain ATCC 15356 / DSM 50701 / NCIMB 9529 / HD100), this protein is Dephospho-CoA kinase.